Consider the following 161-residue polypeptide: MRHAKSSYPRGFPDHIADHDRRLAPRGVREASLAGGWLRTNVPAIEKVLCSTAMRARETLTHSGIEAPVRYTERLYRADPDTVIKEIKAISDEVTTSLIVSHEPTISAVALALTGSGTNNDAAQRISTKFPTSGIAVLNVAGRWQHLELESAELVAFHVPR.

The protein belongs to the SixA phosphatase family.

This is an uncharacterized protein from Mycobacterium leprae (strain TN).